We begin with the raw amino-acid sequence, 834 residues long: Protein ROOT HAIR DEFECTIVE 3 homolog 2 (834 aa).

Residues 1–683 are Cytoplasmic-facing; the sequence is MGENDDGCST…EAHKRNNNWL (683 aa). The region spanning 37–252 is the GB1/RHD3-type G domain; sequence GLSYAVVAIM…ISPGGLAGDR (216 aa). 47-54 serves as a coordination point for GTP; the sequence is GPQSSGKS. Residues 214–241 adopt a coiled-coil conformation; it reads MIVALSSYEEKEKQFEQEVAELRQRFFH. Residues 684–704 form a helical membrane-spanning segment; the sequence is PPAWAIVLMIVLGFNEFMMLL. The Lumenal portion of the chain corresponds to 705–707; sequence KNP. A helical transmembrane segment spans residues 708-728; sequence LYLLGFFVAFLLSKALWVQLD. Topologically, residues 729–834 are cytoplasmic; the sequence is IPREFQHGAV…NVQESEISQM (106 aa). Residues 767-783 show a composition bias toward polar residues; it reads TTQEVPDLSASQTYRQQ. Residues 767 to 834 form a disordered region; sequence TTQEVPDLSA…NVQESEISQM (68 aa). The segment covering 784-803 has biased composition (low complexity); the sequence is SPSHSISSTISESVASNISS. A compositionally biased stretch (polar residues) spans 823–834; it reads TNNVQESEISQM.

Belongs to the TRAFAC class dynamin-like GTPase superfamily. GB1/RHD3 GTPase family. RHD3 subfamily. In terms of tissue distribution, expressed in roots, leaves, stems and flowers.

It localises to the endoplasmic reticulum membrane. Functionally, probable GTP-binding protein that may be involved in cell development. This Arabidopsis thaliana (Mouse-ear cress) protein is Protein ROOT HAIR DEFECTIVE 3 homolog 2.